We begin with the raw amino-acid sequence, 216 residues long: Small ribosomal subunit protein uS3c (216 aa).

The region spanning 43–115 (FENDWGTLYN…QTRIKVIQVN (73 aa)) is the KH type-2 domain.

Belongs to the universal ribosomal protein uS3 family. In terms of assembly, part of the 30S ribosomal subunit.

It localises to the plastid. Its subcellular location is the chloroplast. This is Small ribosomal subunit protein uS3c (rps3) from Emiliania huxleyi (Coccolithophore).